A 160-amino-acid chain; its full sequence is Phosphopantetheine adenylyltransferase (160 aa).

A substrate-binding site is contributed by S11. ATP is bound by residues 11–12 and H19; that span reads SF. Substrate-binding residues include K43, L75, and R89. Residues 90–92, E100, and 125–131 each bind ATP; these read GLR and YSFISSS.

Belongs to the bacterial CoaD family. As to quaternary structure, homohexamer. The cofactor is Mg(2+).

The protein resides in the cytoplasm. It catalyses the reaction (R)-4'-phosphopantetheine + ATP + H(+) = 3'-dephospho-CoA + diphosphate. It participates in cofactor biosynthesis; coenzyme A biosynthesis; CoA from (R)-pantothenate: step 4/5. In terms of biological role, reversibly transfers an adenylyl group from ATP to 4'-phosphopantetheine, yielding dephospho-CoA (dPCoA) and pyrophosphate. In Staphylococcus aureus (strain Mu3 / ATCC 700698), this protein is Phosphopantetheine adenylyltransferase.